Reading from the N-terminus, the 500-residue chain is Inner membrane transporter YjeM (500 aa).

The Cytoplasmic segment spans residues 1–7; the sequence is MPHTIKK. The chain crosses the membrane as a helical span at residues 8 to 28; sequence MSLIGLILMIFTSVFGFANSP. Topologically, residues 29 to 37 are periplasmic; it reads SAYYLMGYS. The chain crosses the membrane as a helical span at residues 38 to 58; it reads AIPFYIFSALLFFIPFALMMA. At 59-82 the chain is on the cytoplasmic side; the sequence is EMGAAYRKEEGGIYSWMNNSVGPR. The chain crosses the membrane as a helical span at residues 83–103; the sequence is FAFIGTFMWFSSYIIWMVSTS. The Periplasmic segment spans residues 104 to 132; sequence AKVWVPFSTFLYGSDMTQHWRIAGLEPTQ. The chain crosses the membrane as a helical span at residues 133 to 153; sequence VVGLLAVAWMILVTVVASKGI. The Cytoplasmic segment spans residues 154–163; it reads NKIARITAVG. A helical membrane pass occupies residues 164-184; the sequence is GIAVMCLNLVLLLVSITILLL. Over 185–209 the chain is Periplasmic; the sequence is NGGHFAQDINFLASPNPGYQSGLAM. The chain crosses the membrane as a helical span at residues 210–230; that stretch reads LSFVVFAIFAYGGIEAVGGLV. Topologically, residues 231–243 are cytoplasmic; sequence DKTENPEKNFAKG. The helical transmembrane segment at 244–264 threads the bilayer; sequence IVFAAIVISIGYSLAIFLWGV. Over 265–319 the chain is Periplasmic; it reads STNWQQVLSNGSVNLGNITYVLMKSLGMTLGNALHLSPEASLSLGVWFARITGLS. The chain crosses the membrane as a helical span at residues 320 to 340; that stretch reads MFLAYTGAFFTLCYSPLKAII. At 341–369 the chain is on the cytoplasmic side; that stretch reads QGTPKALWPEPMTRLNAMGMPSIAMWMQC. A helical membrane pass occupies residues 370–390; that stretch reads GLVTVFILLVSFGGGTASAFF. At 391–394 the chain is on the periplasmic side; sequence NKLT. The chain crosses the membrane as a helical span at residues 395–415; sequence LMANVSMTLPYLFLALAFPFF. Topologically, residues 416–433 are cytoplasmic; sequence KARQDLDRPFVIFKTHLS. Residues 434 to 454 traverse the membrane as a helical segment; the sequence is AMIATVVVVLVVTFANVFTII. Residues 455 to 462 are Periplasmic-facing; the sequence is QPVVEAGD. The chain crosses the membrane as a helical span at residues 463 to 483; that stretch reads WDSTLWMIGGPVFFSLLAMAI. Topologically, residues 484 to 500 are cytoplasmic; it reads YQNYCSRVAKNPQWAVE.

Belongs to the amino acid-polyamine-organocation (APC) superfamily.

It is found in the cell inner membrane. This Escherichia coli (strain K12) protein is Inner membrane transporter YjeM (yjeM).